Consider the following 237-residue polypeptide: Probable 2-phosphosulfolactate phosphatase (237 aa).

It belongs to the ComB family. The cofactor is Mg(2+).

It carries out the reaction (2R)-O-phospho-3-sulfolactate + H2O = (2R)-3-sulfolactate + phosphate. This is Probable 2-phosphosulfolactate phosphatase from Thermus thermophilus (strain ATCC 27634 / DSM 579 / HB8).